We begin with the raw amino-acid sequence, 101 residues long: MCSSPSAPTAEPDVEMDVHTVSSENLPWLCIVWDDPVNLMSYVTYVFQTVLGYSRKRANELMMQVHTEGKAVVSSGEKDKVEGDVKKLHVAGLWATMQQAG.

Belongs to the ClpS family. As to quaternary structure, binds to the N-terminal domain of the chaperone ClpA.

Its function is as follows. Involved in the modulation of the specificity of the ClpAP-mediated ATP-dependent protein degradation. This Corynebacterium efficiens (strain DSM 44549 / YS-314 / AJ 12310 / JCM 11189 / NBRC 100395) protein is ATP-dependent Clp protease adapter protein ClpS.